A 308-amino-acid chain; its full sequence is MRQLFVLDPLQCIQPAKDSSAALMQAAQRASIEVWACTPADLQARGDQLSAIAVPVVAEPWISTGEPRSLPLTDFACIWMRKDPPVDEGYLYATHLLELAERAGVCVLNRPAALRAWNEKLGALRFNNLMAPTLVASRVSELAAFAREQEEVVLKPLGGRAGQGLVRVAGAAPGLEALLELVTDQEQLPVMVQRFLPAVIEGDKRILLVDGEPLGAVNRRPKAGDFRSNLAMGGRPEPTELDSRELQICAELAPVLREQGLFFVGIDVIDGLLSEINVTSPTGIREVERLKGVPLADQVIARLLVSLG.

Residues 120–304 (KLGALRFNNL…LADQVIARLL (185 aa)) enclose the ATP-grasp domain. Position 146–202 (146–202 (AREQEEVVLKPLGGRAGQGLVRVAGAAPGLEALLELVTDQEQLPVMVQRFLPAVIEG)) interacts with ATP. Residues E275 and N277 each coordinate Mg(2+).

The protein belongs to the prokaryotic GSH synthase family. The cofactor is Mg(2+). Mn(2+) serves as cofactor.

It carries out the reaction gamma-L-glutamyl-L-cysteine + glycine + ATP = glutathione + ADP + phosphate + H(+). It functions in the pathway sulfur metabolism; glutathione biosynthesis; glutathione from L-cysteine and L-glutamate: step 2/2. This chain is Glutathione synthetase, found in Prochlorococcus marinus (strain MIT 9313).